The following is a 195-amino-acid chain: Protein GrpE (195 aa).

Belongs to the GrpE family. In terms of assembly, homodimer.

It is found in the cytoplasm. Functionally, participates actively in the response to hyperosmotic and heat shock by preventing the aggregation of stress-denatured proteins, in association with DnaK and GrpE. It is the nucleotide exchange factor for DnaK and may function as a thermosensor. Unfolded proteins bind initially to DnaJ; upon interaction with the DnaJ-bound protein, DnaK hydrolyzes its bound ATP, resulting in the formation of a stable complex. GrpE releases ADP from DnaK; ATP binding to DnaK triggers the release of the substrate protein, thus completing the reaction cycle. Several rounds of ATP-dependent interactions between DnaJ, DnaK and GrpE are required for fully efficient folding. The sequence is that of Protein GrpE from Francisella tularensis subsp. holarctica (strain OSU18).